A 214-amino-acid polypeptide reads, in one-letter code: Large ribosomal subunit protein uL18 (214 aa).

Belongs to the universal ribosomal protein uL18 family. As to quaternary structure, part of the 50S ribosomal subunit. Contacts the 5S and 23S rRNAs.

Its function is as follows. This is one of the proteins that bind and probably mediate the attachment of the 5S RNA into the large ribosomal subunit, where it forms part of the central protuberance. The protein is Large ribosomal subunit protein uL18 of Aeropyrum pernix (strain ATCC 700893 / DSM 11879 / JCM 9820 / NBRC 100138 / K1).